Reading from the N-terminus, the 307-residue chain is Acetyl-coenzyme A carboxylase carboxyl transferase subunit beta (307 aa).

Residues 28–297 (LWVKCPDTGQ…TPQPGTAPEP (270 aa)) enclose the CoA carboxyltransferase N-terminal domain. A disordered region spans residues 286 to 307 (RRTPQPGTAPEPTTPEPLPNAA). Residues 292–307 (GTAPEPTTPEPLPNAA) show a composition bias toward pro residues.

It belongs to the AccD/PCCB family. Acetyl-CoA carboxylase is a heterohexamer composed of biotin carboxyl carrier protein (AccB), biotin carboxylase (AccC) and two subunits each of ACCase subunit alpha (AccA) and ACCase subunit beta (AccD).

Its subcellular location is the cytoplasm. It catalyses the reaction N(6)-carboxybiotinyl-L-lysyl-[protein] + acetyl-CoA = N(6)-biotinyl-L-lysyl-[protein] + malonyl-CoA. Its pathway is lipid metabolism; malonyl-CoA biosynthesis; malonyl-CoA from acetyl-CoA: step 1/1. Functionally, component of the acetyl coenzyme A carboxylase (ACC) complex. Biotin carboxylase (BC) catalyzes the carboxylation of biotin on its carrier protein (BCCP) and then the CO(2) group is transferred by the transcarboxylase to acetyl-CoA to form malonyl-CoA. The chain is Acetyl-coenzyme A carboxylase carboxyl transferase subunit beta from Methylorubrum extorquens (strain CM4 / NCIMB 13688) (Methylobacterium extorquens).